The sequence spans 1098 residues: Platelet-derived growth factor receptor beta (1098 aa).

The N-terminal stretch at 1-31 (MGLPGVIPALVLRGQLLLSVLWLLGPQTSRG) is a signal peptide. Over 32-531 (LVITPPGPEF…VVPHSLPFKV (500 aa)) the chain is Extracellular. Ig-like C2-type domains are found at residues 33-119 (VITP…YIFV), 128-209 (PMDS…YSLQ), 213-308 (INVS…INIS), 330-402 (HRSR…HEDD), and 415-523 (PVRV…VTVV). N-linked (GlcNAc...) asparagine glycosylation is found at Asn-44, Asn-88, and Asn-102. A disulfide bridge connects residues Cys-53 and Cys-99. A disulfide bridge connects residues Cys-148 and Cys-189. Asn-214 carries N-linked (GlcNAc...) asparagine glycosylation. Cys-234 and Cys-290 are oxidised to a cystine. Residues Asn-291, Asn-306, Asn-353, Asn-370, Asn-444, Asn-467, and Asn-478 are each glycosylated (N-linked (GlcNAc...) asparagine). A disulfide bridge connects residues Cys-435 and Cys-507. The chain crosses the membrane as a helical span at residues 532-552 (VVISAILALVVLTVISLIILI). At 553 to 1098 (MLWQKKPRYE…PLAEAEDSFL (546 aa)) the chain is on the cytoplasmic side. Phosphotyrosine; by autocatalysis is present on residues Tyr-561, Tyr-578, and Tyr-580. A Protein kinase domain is found at 599 to 961 (LVLGRTLGSG…QLVLLLERLL (363 aa)). Residues 605–613 (LGSGAFGQV) and Lys-633 contribute to the ATP site. Tyr-685 is subject to Phosphotyrosine; by ABL1 and ABL2. Residues Tyr-715, Tyr-739, Tyr-750, Tyr-762, Tyr-770, Tyr-774, and Tyr-777 each carry the phosphotyrosine; by autocatalysis modification. Catalysis depends on Asp-825, which acts as the Proton acceptor. Residue Tyr-856 is modified to Phosphotyrosine; by autocatalysis. A phosphotyrosine; by ABL1 and ABL2 mark is found at Tyr-933 and Tyr-969. Phosphotyrosine; by autocatalysis is present on residues Tyr-1008 and Tyr-1020. The segment at 1016-1098 (SDNDYIIPLP…PLAEAEDSFL (83 aa)) is disordered. Residues 1042–1059 (SLASSTLNEVNTSSTISC) are compositionally biased toward polar residues. Residues 1062 to 1082 (PLELQEEPQQAEPEAQLEQPQ) are compositionally biased toward low complexity.

This sequence belongs to the protein kinase superfamily. Tyr protein kinase family. CSF-1/PDGF receptor subfamily. As to quaternary structure, interacts with homodimeric PDGFB and PDGFD, and with heterodimers formed by PDGFA and PDGFB. May also interact with homodimeric PDGFC. Monomer in the absence of bound ligand. Interaction with homodimeric PDGFB, heterodimers formed by PDGFA and PDGFB or homodimeric PDGFD, leads to receptor dimerization, where both PDGFRA homodimers and heterodimers with PDGFRB are observed. Interacts with SH2B2/APS. Interacts directly (tyrosine phosphorylated) with SHB. Interacts (tyrosine phosphorylated) with PIK3R1 and RASA1. Interacts (tyrosine phosphorylated) with CBL. Interacts (tyrosine phosphorylated) with SRC and SRC family kinases. Interacts (tyrosine phosphorylated) with PIK3C2B, maybe indirectly. Interacts (tyrosine phosphorylated) with SHC1, GRB7, GRB10 and NCK1. Interaction with GRB2 is mediated by SHC1. Interacts (via C-terminus) with NHERF1. Autophosphorylated on tyrosine residues upon ligand binding. Autophosphorylation occurs in trans, i.e. one subunit of the dimeric receptor phosphorylates tyrosine residues on the other subunit. Phosphorylation at Tyr-578, and to a lesser degree, Tyr-580 is important for interaction with SRC. Phosphorylation at Tyr-715 is important for interaction with GRB2. Phosphorylation at Tyr-739 and Tyr-750 is important for interaction with PIK3R1. Phosphorylation at Tyr-750 is important for interaction with NCK1. Phosphorylation at Tyr-770 and Tyr-856 is important for interaction with RASA1/GAP. Phosphorylation at Tyr-856 is important for efficient phosphorylation of PLCG1 and PTPN11, resulting in increased phosphorylation of AKT1, MAPK1/ERK2 and/or MAPK3/ERK1, PDCD6IP/ALIX and STAM, and in increased cell proliferation. Phosphorylation at Tyr-1008 is important for interaction with PTPN11. Phosphorylation at Tyr-1008 and Tyr-1020 is important for interaction with PLCG1. Dephosphorylated by PTPRJ at Tyr-750, Tyr-856, Tyr-1008 and Tyr-1020. Dephosphorylated by PTPN2 at Tyr-578 and Tyr-1020. In terms of processing, N-glycosylated. Post-translationally, ubiquitinated. After autophosphorylation, the receptor is polyubiquitinated, leading to its degradation. As to expression, weakly expressed in glomerular mesangial cells and interstitial cells. Up-regulated in areas of renal fibrosis. In mice with unilateral ureteral obstruction, increased expression in interstitial cells at day 4 and expression is markedly elevated at day 7 and is maximal at day 14.

The protein resides in the cell membrane. Its subcellular location is the cytoplasmic vesicle. It localises to the lysosome lumen. It catalyses the reaction L-tyrosyl-[protein] + ATP = O-phospho-L-tyrosyl-[protein] + ADP + H(+). Its activity is regulated as follows. Present in an inactive conformation in the absence of bound ligand. Binding of PDGFB and/or PDGFD leads to dimerization and activation by autophosphorylation on tyrosine residues. Functionally, tyrosine-protein kinase that acts as a cell-surface receptor for homodimeric PDGFB and PDGFD and for heterodimers formed by PDGFA and PDGFB, and plays an essential role in the regulation of embryonic development, cell proliferation, survival, differentiation, chemotaxis and migration. Plays an essential role in blood vessel development by promoting proliferation, migration and recruitment of pericytes and smooth muscle cells to endothelial cells. Plays a role in the migration of vascular smooth muscle cells and the formation of neointima at vascular injury sites. Required for normal development of the cardiovascular system. Required for normal recruitment of pericytes (mesangial cells) in the kidney glomerulus, and for normal formation of a branched network of capillaries in kidney glomeruli. Promotes rearrangement of the actin cytoskeleton and the formation of membrane ruffles. Binding of its cognate ligands - homodimeric PDGFB, heterodimers formed by PDGFA and PDGFB or homodimeric PDGFD -leads to the activation of several signaling cascades; the response depends on the nature of the bound ligand and is modulated by the formation of heterodimers between PDGFRA and PDGFRB. Phosphorylates PLCG1, PIK3R1, PTPN11, RASA1/GAP, CBL, SHC1 and NCK1. Activation of PLCG1 leads to the production of the cellular signaling molecules diacylglycerol and inositol 1,4,5-trisphosphate, mobilization of cytosolic Ca(2+) and the activation of protein kinase C. Phosphorylation of PIK3R1, the regulatory subunit of phosphatidylinositol 3-kinase, leads to the activation of the AKT1 signaling pathway. Phosphorylation of SHC1, or of the C-terminus of PTPN11, creates a binding site for GRB2, resulting in the activation of HRAS, RAF1 and down-stream MAP kinases, including MAPK1/ERK2 and/or MAPK3/ERK1. Promotes phosphorylation and activation of SRC family kinases. Promotes phosphorylation of PDCD6IP/ALIX and STAM. Receptor signaling is down-regulated by protein phosphatases that dephosphorylate the receptor and its down-stream effectors, and by rapid internalization of the activated receptor. This chain is Platelet-derived growth factor receptor beta (Pdgfrb), found in Mus musculus (Mouse).